Reading from the N-terminus, the 186-residue chain is Peptidyl-tRNA hydrolase (186 aa).

TRNA is bound at residue Tyr14. Residue His19 is the Proton acceptor of the active site. Positions 64, 66, and 112 each coordinate tRNA.

It belongs to the PTH family. In terms of assembly, monomer.

The protein resides in the cytoplasm. The catalysed reaction is an N-acyl-L-alpha-aminoacyl-tRNA + H2O = an N-acyl-L-amino acid + a tRNA + H(+). Its function is as follows. Hydrolyzes ribosome-free peptidyl-tRNAs (with 1 or more amino acids incorporated), which drop off the ribosome during protein synthesis, or as a result of ribosome stalling. Catalyzes the release of premature peptidyl moieties from peptidyl-tRNA molecules trapped in stalled 50S ribosomal subunits, and thus maintains levels of free tRNAs and 50S ribosomes. This Mycoplasma capricolum subsp. capricolum (strain California kid / ATCC 27343 / NCTC 10154) protein is Peptidyl-tRNA hydrolase.